The following is a 700-amino-acid chain: Elongation factor G 2 (700 aa).

Residues 8 to 290 enclose the tr-type G domain; it reads ERYRNIGISA…AVLDFLPSPI (283 aa). GTP contacts are provided by residues 17 to 24, 88 to 92, and 142 to 145; these read AHIDAGKT, DTPGH, and NKMD.

This sequence belongs to the TRAFAC class translation factor GTPase superfamily. Classic translation factor GTPase family. EF-G/EF-2 subfamily.

The protein resides in the cytoplasm. In terms of biological role, catalyzes the GTP-dependent ribosomal translocation step during translation elongation. During this step, the ribosome changes from the pre-translocational (PRE) to the post-translocational (POST) state as the newly formed A-site-bound peptidyl-tRNA and P-site-bound deacylated tRNA move to the P and E sites, respectively. Catalyzes the coordinated movement of the two tRNA molecules, the mRNA and conformational changes in the ribosome. The sequence is that of Elongation factor G 2 from Paraburkholderia xenovorans (strain LB400).